An 831-amino-acid polypeptide reads, in one-letter code: Pleckstrin homology-like domain family B member 1 (831 aa).

Residues leucine 1 to arginine 11 show a composition bias toward basic residues. Positions leucine 1–isoleucine 73 are disordered. Arginine 6 bears the Omega-N-methylarginine mark. Residues serine 12 and serine 14 each carry the phosphoserine modification. The residue at position 16 (threonine 16) is a Phosphothreonine. Phosphoserine occurs at positions 27, 33, 45, 49, 57, 72, 77, and 175. Over residues glycine 39–histidine 51 the composition is skewed to polar residues. Disordered stretches follow at residues arginine 160–glutamate 209 and asparagine 416–threonine 465. The span at glutamate 174–cysteine 188 shows a compositional bias: basic and acidic residues. Positions aspartate 180–glutamate 306 form a coiled coil. Phosphoserine is present on residues serine 421 and serine 467. The segment covering serine 421 to serine 442 has biased composition (low complexity). Residues serine 584–serine 603 are disordered. A coiled-coil region spans residues methionine 610 to leucine 676. The 104-residue stretch at serine 721–glutamate 824 folds into the PH domain.

In Rattus norvegicus (Rat), this protein is Pleckstrin homology-like domain family B member 1 (Phldb1).